The sequence spans 240 residues: Cytochrome c-551 (240 aa).

Residues C41, C44, H45, C128, C132, and H133 each coordinate heme c.

In terms of processing, binds 2 heme c groups per subunit.

In Rhodocyclus tenuis (Rhodospirillum tenue), this protein is Cytochrome c-551.